A 473-amino-acid polypeptide reads, in one-letter code: Myocyte-specific enhancer factor 2C (473 aa).

One can recognise an MADS-box domain in the interval 3 to 57 (RKKIQITRIMDERNRQVTFTKRKFGLMKKAYELSVLCDCEIALIIFNSTNKLFQY). K4 bears the N6-acetyllysine mark. The mef2-type DNA-binding region spans 58–86 (ASTDMDKVLLKYTEYNEPHESRTNSDIVE). Residue S59 is modified to Phosphoserine; by CK2. The interval 91-116 (KGLNGCDSPDPDADDSVGHSPESEDK) is disordered. Phosphoserine occurs at positions 98, 106, and 110. K116 and K119 each carry N6-acetyllysine. The tract at residues 180-224 (NSMSPGVTHRPPSAGNTGGLMGGDLTSGAGTSAGNGYGNPRNSPG) is disordered. Phosphoserine is present on residues S222 and S228. N6-acetyllysine occurs at positions 234 and 239. Phosphoserine is present on S240. N6-acetyllysine occurs at positions 252 and 264. A beta domain region spans residues 271-278 (SEDVDLLL). A phosphothreonine; by MAPK14 mark is found at T293 and T300. A transcription repressor region spans residues 368-399 (ACTSTHLSQSSNLSLPSTQSLNIKSEPVSPPR). Residues 375–390 (SQSSNLSLPSTQSLNI) are compositionally biased toward polar residues. A disordered region spans residues 375–473 (SQSSNLSLPS…RMRLSEGWAT (99 aa)). K391 is covalently cross-linked (Glycyl lysine isopeptide (Lys-Gly) (interchain with G-Cter in SUMO)). S396 is modified (phosphoserine; by CDK5). A Phosphoserine; by MAPK7 modification is found at S419. Over residues 419 to 432 (SPVDSLSSCSSSYD) the composition is skewed to low complexity. The span at 433–443 (GSDREDHRNEF) shows a compositional bias: basic and acidic residues. The residue at position 445 (S445) is a Phosphoserine.

Belongs to the MEF2 family. In terms of assembly, forms a complex with class II HDACs in undifferentiating cells. On myogenic differentiation, HDACs are released into the cytoplasm allowing MEF2s to interact with other proteins for activation. Interacts with EP300 in differentiating cells; the interaction acetylates MEF2C leading to increased DNA binding and activation. Interacts with HDAC7 and CARM1. Interacts with HDAC4 and HDAC9; the interaction with HDACs represses transcriptional activity. Interacts with LPIN1. Interacts with MYOCD. Interacts with AKAP13. Interacts with FOXK1; the interaction inhibits MEF2C transactivation activity. Interacts (via N-terminus) with HABP4; this interaction decreases DNA-binding activity of MEF2C in myocardial cells in response to mechanical stress. Interacts with JPH2; interaction specifically takes place with the Junctophilin-2 N-terminal fragment cleavage product of JPH2. Interacts (via MADS box) with SOX18. Interacts with PHF7; the interaction promotes MEF2C binding to its transcription targets. Post-translationally, phosphorylation on Ser-59 enhances DNA binding activity. Phosphorylation on Ser-396 is required for Lys-391 sumoylation and inhibits transcriptional activity. In terms of processing, acetylated by p300 on several sites in diffentiating myocytes. Acetylation on Lys-4 increases DNA binding and transactivation. Sumoylated on Lys-391 with SUMO2 but not by SUMO1 represses transcriptional activity. Post-translationally, proteolytically cleaved in cerebellar granule neurons, probably by caspase 7, following neurotoxicity. Preferentially cleaves the CDK5-mediated hyperphosphorylated form which leads to neuron apoptosis and transcriptional inactivation. In terms of tissue distribution, expressed in brain and skeletal muscle.

Its subcellular location is the nucleus. It localises to the cytoplasm. It is found in the sarcoplasm. In terms of biological role, transcription activator which binds specifically to the MEF2 element present in the regulatory regions of many muscle-specific genes. Controls cardiac morphogenesis and myogenesis, and is also involved in vascular development. Enhances transcriptional activation mediated by SOX18. Plays an essential role in hippocampal-dependent learning and memory by suppressing the number of excitatory synapses and thus regulating basal and evoked synaptic transmission. Crucial for normal neuronal development, distribution, and electrical activity in the neocortex. Necessary for proper development of megakaryocytes and platelets and for bone marrow B-lymphopoiesis. Required for B-cell survival and proliferation in response to BCR stimulation, efficient IgG1 antibody responses to T-cell-dependent antigens and for normal induction of germinal center B-cells. May also be involved in neurogenesis and in the development of cortical architecture. Isoforms that lack the repressor domain are more active than isoform 1. The chain is Myocyte-specific enhancer factor 2C from Homo sapiens (Human).